The sequence spans 503 residues: Structure-specific endonuclease subunit EME2 (503 aa).

Basic and acidic residues-rich tracts occupy residues 1 to 10 (METKQERETG), 38 to 48 (ETNKPQTESRK), and 112 to 135 (AEEKKRQRELKRQEKAQKKELEKI). Residues 1 to 135 (METKQERETG…KAQKKELEKI (135 aa)) are disordered. Residues 70–366 (QPDVEEKTKN…RPFRKHWEAQ (297 aa)) are nuclease-like domain; forms the post-nick DNA binding interface and is involved in DNA recognition and bending. Residues 103–151 (EQVAAEQEQAEEKKRQRELKRQEKAQKKELEKIERERRKETNLALKLLR) are a coiled coil. Residues 388 to 503 (GLPLTWRRQI…NPELVLDLNS (116 aa)) form a helix-hairpin-helix (2HhH); forms the pre-nick DNA binding interface and is involved in DNA recognition and bending region.

Belongs to the EME1/MMS4 family. As to quaternary structure, part of the heterodimeric MUS81-EME2 complex; the complex forms specifically during the DNA replication phase of the cell cycle.

The protein resides in the nucleus. In terms of biological role, non-catalytic subunit of the structure-specific, heterodimeric DNA endonuclease MUS81-EME2 which is involved in the maintenance of genome stability. In the complex, EME2 is required for DNA cleavage, participating in DNA recognition and bending. MUS81-EME2 cleaves 3'-flaps and nicked Holliday junctions, and exhibit limited endonuclease activity with 5' flaps and nicked double-stranded DNAs. MUS81-EME2 which is active during the replication of DNA is more specifically involved in replication fork processing. Replication forks frequently encounter obstacles to their passage, including DNA base lesions, DNA interstrand cross-links, difficult-to-replicate sequences, transcription bubbles, or tightly bound proteins. One mechanism for the restart of a stalled replication fork involves nucleolytic cleavage mediated by the MUS81-EME2 endonuclease. By acting upon the stalled fork, MUS81-EME2 generates a DNA double-strand break (DSB) that can be repaired by homologous recombination, leading to the restoration of an active fork. MUS81-EME2 could also function in telomere maintenance. The polypeptide is Structure-specific endonuclease subunit EME2 (eme2) (Xenopus tropicalis (Western clawed frog)).